Reading from the N-terminus, the 388-residue chain is Succinate--CoA ligase [ADP-forming] subunit beta (388 aa).

The ATP-grasp domain occupies 9 to 244 (KEILRKYNVP…LDEEDPAEIE (236 aa)). Residues Lys-46, 53-55 (GRG), Glu-99, Ala-102, and Glu-107 each bind ATP. The Mg(2+) site is built by Asn-199 and Asp-213. Residues Asn-264 and 321-323 (GIM) contribute to the substrate site.

The protein belongs to the succinate/malate CoA ligase beta subunit family. Heterotetramer of two alpha and two beta subunits. Mg(2+) is required as a cofactor.

It carries out the reaction succinate + ATP + CoA = succinyl-CoA + ADP + phosphate. The enzyme catalyses GTP + succinate + CoA = succinyl-CoA + GDP + phosphate. The protein operates within carbohydrate metabolism; tricarboxylic acid cycle; succinate from succinyl-CoA (ligase route): step 1/1. In terms of biological role, succinyl-CoA synthetase functions in the citric acid cycle (TCA), coupling the hydrolysis of succinyl-CoA to the synthesis of either ATP or GTP and thus represents the only step of substrate-level phosphorylation in the TCA. The beta subunit provides nucleotide specificity of the enzyme and binds the substrate succinate, while the binding sites for coenzyme A and phosphate are found in the alpha subunit. This chain is Succinate--CoA ligase [ADP-forming] subunit beta, found in Ralstonia pickettii (strain 12J).